The primary structure comprises 1560 residues: BRD4-interacting chromatin-remodeling complex-associated protein (1560 aa).

6 disordered regions span residues V53–Q99, A624–T688, I723–P949, N974–P1028, K1049–T1075, and S1215–Y1300. The span at A86 to G96 shows a compositional bias: gly residues. Positions A624–P664 are enriched in low complexity. Positions A726 to A736 are enriched in pro residues. Residues P747–P780 are compositionally biased toward low complexity. Pro residues-rich tracts occupy residues L791–R806, P814–L831, and V843–P880. The span at P881–S896 shows a compositional bias: low complexity. S919 bears the Phosphoserine mark. The residue at position 921 (T921) is a Phosphothreonine. Pro residues predominate over residues P932–R941. The span at A1005–P1028 shows a compositional bias: low complexity. N6-acetyllysine is present on K1057. The span at L1227–T1236 shows a compositional bias: polar residues. Low complexity predominate over residues A1264–L1281. Residue K1313 forms a Glycyl lysine isopeptide (Lys-Gly) (interchain with G-Cter in SUMO2) linkage. Disordered stretches follow at residues N1324–A1424 and Y1440–R1560. Residues H1331–T1356 are compositionally biased toward pro residues. Low complexity predominate over residues P1401–G1412. Residue S1413 is modified to Phosphoserine. The segment covering A1485 to P1515 has biased composition (polar residues).

Component of the multiprotein chromatin-remodeling complexes SWI/SNF: SWI/SNF-A (BAF), SWI/SNF-B (PBAF) and related complexes. The canonical complex contains a catalytic subunit (either SMARCA4/BRG1/BAF190A or SMARCA2/BRM/BAF190B) and at least SMARCE1, ACTL6A/BAF53, SMARCC1/BAF155, SMARCC2/BAF170, and SMARCB1/SNF5/BAF47. Other subunits specific to each of the complexes may also be present permitting several possible combinations developmentally and tissue specific. Component of the SWI/SNF (GBAF) subcomplex, which includes at least BICRA or BICRAL (mutually exclusive), BRD9, SS18, the core BAF subunits, SMARCA2/BRM, SMARCA4/BRG1/BAF190A, ACTL6A/BAF53, SMARCC1/BAF155, and SMARCD1/BAF60A. Interacts with BRD4; the interaction bridges BRD4 to the GBAF complex. In terms of tissue distribution, expressed at moderate levels in heart, brain, placenta, skeletal muscle, and pancreas, and at lower levels in lung, liver and kidney.

It is found in the nucleus. Its function is as follows. Component of SWI/SNF chromatin remodeling subcomplex GBAF that carries out key enzymatic activities, changing chromatin structure by altering DNA-histone contacts within a nucleosome in an ATP-dependent manner. May play a role in BRD4-mediated gene transcription. The polypeptide is BRD4-interacting chromatin-remodeling complex-associated protein (Homo sapiens (Human)).